The following is a 728-amino-acid chain: Diacylglycerol kinase 1 (728 aa).

A helical transmembrane segment spans residues 27 to 48 (GLMFSCFVAALVGILTIAYTAF). 2 consecutive Phorbol-ester/DAG-type zinc fingers follow at residues 79–137 (PHSW…PKDC) and 149–212 (VHQW…GDIC). 2 disordered regions span residues 265–296 (KQTN…PTVN) and 308–336 (VMNG…TGSF). Polar residues predominate over residues 267-294 (TNETSADTGNSGSNCDESTESTADTGPT). Positions 310-319 (NGDSSNGDSD) are enriched in low complexity. Residues 357–496 (SDARPLLVFI…LDRWKVSILN (140 aa)) enclose the DAGKc domain. Glycyl lysine isopeptide (Lys-Gly) (interchain with G-Cter in ubiquitin) cross-links involve residues lysine 491 and lysine 500.

This sequence belongs to the eukaryotic diacylglycerol kinase family. As to quaternary structure, monomer. In terms of tissue distribution, expressed in roots, shoots, and leaves.

It localises to the membrane. It catalyses the reaction a 1,2-diacyl-sn-glycerol + ATP = a 1,2-diacyl-sn-glycero-3-phosphate + ADP + H(+). Its function is as follows. Phosphorylates the second messenger diacylglycerol (DAG) to generate phosphatidic acid (PA), another important signaling molecule. PA is required for plant development and responses to abiotic stress and pathogen attack. May be involved in the accumulation of PA during cold stress. This Arabidopsis thaliana (Mouse-ear cress) protein is Diacylglycerol kinase 1 (DGK1).